Consider the following 680-residue polypeptide: Conserved oligomeric Golgi complex subunit 6 (680 aa).

Positions 479-517 (HKSKKSGQLPRRSRTSSDSSQLTSVDALLSSSPSPPQNN) are disordered.

Belongs to the COG6 family. In terms of assembly, component of the conserved oligomeric Golgi complex which is composed of eight different subunits and is required for normal Golgi morphology and localization. Interacts with COG5, COG7 and COG8.

It localises to the golgi apparatus membrane. Functionally, required for normal Golgi function. The sequence is that of Conserved oligomeric Golgi complex subunit 6 from Arabidopsis thaliana (Mouse-ear cress).